Reading from the N-terminus, the 213-residue chain is tRNA (guanine-N(7)-)-methyltransferase (213 aa).

Residues Glu44, Glu69, Asp96, and Asp118 each contribute to the S-adenosyl-L-methionine site. The active site involves Asp118. Lys122 is a binding site for substrate. An interaction with RNA region spans residues 124–129; that stretch reads RHEKRR. Substrate-binding positions include Asp154 and 191–194; that span reads TEYE.

Belongs to the class I-like SAM-binding methyltransferase superfamily. TrmB family. As to quaternary structure, homodimer.

It catalyses the reaction guanosine(46) in tRNA + S-adenosyl-L-methionine = N(7)-methylguanosine(46) in tRNA + S-adenosyl-L-homocysteine. It functions in the pathway tRNA modification; N(7)-methylguanine-tRNA biosynthesis. In terms of biological role, catalyzes the formation of N(7)-methylguanine at position 46 (m7G46) in tRNA. This chain is tRNA (guanine-N(7)-)-methyltransferase, found in Bacillus subtilis (strain 168).